A 134-amino-acid chain; its full sequence is Ribonuclease P protein component (134 aa).

Belongs to the RnpA family. In terms of assembly, consists of a catalytic RNA component (M1 or rnpB) and a protein subunit.

It carries out the reaction Endonucleolytic cleavage of RNA, removing 5'-extranucleotides from tRNA precursor.. RNaseP catalyzes the removal of the 5'-leader sequence from pre-tRNA to produce the mature 5'-terminus. It can also cleave other RNA substrates such as 4.5S RNA. The protein component plays an auxiliary but essential role in vivo by binding to the 5'-leader sequence and broadening the substrate specificity of the ribozyme. The protein is Ribonuclease P protein component of Pseudomonas putida (strain GB-1).